Consider the following 522-residue polypeptide: Protein DETOXIFICATION 31 (522 aa).

12 helical membrane passes run 89–109 (GAVT…AVSI), 113–133 (VIAG…ETLC), 154–174 (VILS…APIL), 183–203 (ISAM…AYAI), 217–237 (IMVM…FTWL), 249–269 (LALV…VYIF), 299–319 (AAML…AGYL), 324–344 (VSVA…MVAF), 371–391 (VVAV…LLFF), 415–435 (MLAF…VAVG), 441–461 (VVAY…GLLL), and 471–491 (GIWW…TWMI).

Belongs to the multi antimicrobial extrusion (MATE) (TC 2.A.66.1) family.

It localises to the membrane. Its function is as follows. Positively mediates root hair elongation. The protein is Protein DETOXIFICATION 31 of Arabidopsis thaliana (Mouse-ear cress).